The sequence spans 161 residues: MAKKNSKPKAGSNTIALNKKARHEYFIEDEIEAGMELQGWEVKALRQGKANISESYVFMRDGEAFVSGMTITPLNQASTHVVANPTRVRKLLMSRRELDNLLGRINREGMTLAALSLYWARSWVKIKIGVAKGKKLHDKRDDIKDRDWQRQKARVMKSSLR.

It belongs to the SmpB family.

It localises to the cytoplasm. Functionally, required for rescue of stalled ribosomes mediated by trans-translation. Binds to transfer-messenger RNA (tmRNA), required for stable association of tmRNA with ribosomes. tmRNA and SmpB together mimic tRNA shape, replacing the anticodon stem-loop with SmpB. tmRNA is encoded by the ssrA gene; the 2 termini fold to resemble tRNA(Ala) and it encodes a 'tag peptide', a short internal open reading frame. During trans-translation Ala-aminoacylated tmRNA acts like a tRNA, entering the A-site of stalled ribosomes, displacing the stalled mRNA. The ribosome then switches to translate the ORF on the tmRNA; the nascent peptide is terminated with the 'tag peptide' encoded by the tmRNA and targeted for degradation. The ribosome is freed to recommence translation, which seems to be the essential function of trans-translation. The polypeptide is SsrA-binding protein (Vibrio vulnificus (strain YJ016)).